A 142-amino-acid chain; its full sequence is Transcriptional regulator MraZ (142 aa).

2 consecutive SpoVT-AbrB domains span residues 5-48 (EFEY…PLCE) and 77-120 (AFDV…DKET).

It belongs to the MraZ family. In terms of assembly, forms oligomers.

The protein localises to the cytoplasm. Its subcellular location is the nucleoid. The polypeptide is Transcriptional regulator MraZ (Dehalococcoides mccartyi (strain ATCC BAA-2100 / JCM 16839 / KCTC 5957 / BAV1)).